Reading from the N-terminus, the 151-residue chain is Ribonuclease H (151 aa).

One can recognise an RNase H type-1 domain in the interval 1-143; sequence MEEYVIYTDG…VDRVARKEAA (143 aa). Mg(2+) contacts are provided by aspartate 9, glutamate 48, aspartate 71, and aspartate 135.

It belongs to the RNase H family. In terms of assembly, monomer. Requires Mg(2+) as cofactor.

Its subcellular location is the cytoplasm. The catalysed reaction is Endonucleolytic cleavage to 5'-phosphomonoester.. In terms of biological role, endonuclease that specifically degrades the RNA of RNA-DNA hybrids. The chain is Ribonuclease H from Neorickettsia sennetsu (strain ATCC VR-367 / Miyayama) (Ehrlichia sennetsu).